The primary structure comprises 902 residues: Chloride channel protein 2 (902 aa).

Residues 1-89 (MAASAAAAGE…RCHKFLVSRV (89 aa)) lie on the Cytoplasmic side of the membrane. An essential for channel gating by both voltage and cell volume region spans residues 18–36 (QYEQTLMYGRYTQELGAFA). Threonine 22 is subject to Phosphothreonine. The segment at 38–51 (EEAARIRLGGPEPW) is modulates channel gating by both voltage and cell volume. Transmembrane regions (helical) follow at residues 90–123 (GEDW…AQQW) and 132–157 (ILLQ…TQIL). The short motif at 163–167 (GSGIP) is the Selectivity filter part_1 element. An intramembrane region (helical) is located at residues 166-173 (IPEMKTIL). 2 consecutive transmembrane segments (helical) span residues 182-200 (LTLK…ALGS) and 207-225 (EGPF…SKFL). Positions 205–209 (GKEGP) match the Selectivity filter part_2 motif. 2 consecutive intramembrane regions (helical) follow at residues 241–253 (MLAA…VGCC) and 257–265 (PIGGVLFSI). 5 consecutive transmembrane segments (helical) span residues 277 to 297 (YWRG…LAVW), 323 to 351 (LPAF…VQVM), 360 to 379 (FLMR…ISTL), 431 to 451 (ANVF…SALA), and 459 to 482 (GAFM…MAAW). The Selectivity filter part_3 signature appears at 459–463 (GAFMP). An intramembrane region (helical) is located at residues 499-513 (GGYAVVGAAALAGAV). An intramembrane region (note=Loop between two helices) is located at residues 514 to 515 (TH). The segment at residues 516 to 527 (TVSTAVIVFELT) is an intramembrane region (helical). Residues 528-532 (GQIAH) constitute an intramembrane region (note=Loop between two helices). Residues 533 to 550 (ILPVMIAVILANAVAQSL) form a helical membrane-spanning segment. Over 551–902 (QPSLYDSIIR…SPSDSDDKCQ (352 aa)) the chain is Cytoplasmic. Residues 586-644 (MVRDVPYVALNCTFRDLRLALHRTKGRMLALVESSESMILLGSIERSQVVTLLGAQLSA) enclose the CBS 1 domain. Positions 648–748 (RQHIQERRKA…TSDLEKPESC (101 aa)) are disordered. 2 stretches are compositionally biased toward polar residues: residues 671–683 (PESS…NTED) and 706–719 (SNAS…TGSM). Positions 794–854 (IDPAPFQLVE…GSVTAQGVKV (61 aa)) constitute a CBS 2 domain. The short motif at 816–817 (LL) is the Basolateral membrane sorting element. The tract at residues 860–902 (SFRDSATSSSDTETTEVHALWGPHSCHGLPRDGSPSDSDDKCQ) is disordered.

Belongs to the chloride channel (TC 2.A.49) family. ClC-2/CLCN2 subfamily. As to quaternary structure, homodimer. Interacts with auxiliary subunit HEPACAM.

It is found in the cell membrane. Its subcellular location is the basolateral cell membrane. The protein resides in the cell projection. It localises to the dendritic spine membrane. The protein localises to the axon. It carries out the reaction chloride(in) = chloride(out). The enzyme catalyses thiocyanate(in) = thiocyanate(out). The catalysed reaction is bromide(in) = bromide(out). It catalyses the reaction nitrate(in) = nitrate(out). It carries out the reaction iodide(out) = iodide(in). Its activity is regulated as follows. Common gate kinetics are down-regulated by intracellular ATP. Inhibited by AK-42, a derivative of meclofenamate. Inhibited by Cd(2+). Inhibited by Zn(2+) and PKC activation. Inhibited at acidic pH. CCLN2:HEPACAM channel conductance is up-regulated upon hypo-osmolarity. Functionally, voltage-gated and osmosensitive chloride channel. Forms a homodimeric channel where each subunit has its own ion conduction pathway. Conducts double-barreled currents controlled by two types of gates, two fast glutamate gates that control each subunit independently and a slow common gate that opens and shuts off both subunits simultaneously. Displays inward rectification currents activated upon membrane hyperpolarization and extracellular hypotonicity. Contributes to chloride conductance involved in neuron excitability. In hippocampal neurons, generates a significant part of resting membrane conductance and provides an additional chloride efflux pathway to prevent chloride accumulation in dendrites upon GABA receptor activation. In glia, associates with the auxiliary subunit HEPACAM/GlialCAM at astrocytic processes and myelinated fiber tracts where it may regulate transcellular chloride flux buffering extracellular chloride and potassium concentrations. Regulates aldosterone production in adrenal glands. The opening of CLCN2 channels at hyperpolarized membrane potentials in the glomerulosa causes cell membrane depolarization, activation of voltage-gated calcium channels and increased expression of aldosterone synthase, the rate-limiting enzyme for aldosterone biosynthesis. Contributes to chloride conductance in retinal pigment epithelium involved in phagocytosis of shed photoreceptor outer segments and photoreceptor renewal. Conducts chloride currents at the basolateral membrane of epithelial cells with a role in chloride reabsorption rather than secretion. Permeable to small monovalent anions with chloride &gt; thiocyanate &gt; bromide &gt; nitrate &gt; iodide ion selectivity. This chain is Chloride channel protein 2 (CLCN2), found in Cavia porcellus (Guinea pig).